A 279-amino-acid polypeptide reads, in one-letter code: Proteasome subunit beta 2 (279 aa).

The propeptide at 1–53 (MAAAFDPSGRFPDLFTSVGTSSFSAFLSKAAPELLPGRRPLPPGMATGLTPHA) is removed in mature form; by autocatalysis. The active-site Nucleophile is T54.

It belongs to the peptidase T1B family. As to quaternary structure, the 20S proteasome core is composed of 14 alpha and 14 beta subunits that assemble into four stacked heptameric rings, resulting in a barrel-shaped structure. The two inner rings, each composed of seven catalytic beta subunits, are sandwiched by two outer rings, each composed of seven alpha subunits. The catalytic chamber with the active sites is on the inside of the barrel. Has a gated structure, the ends of the cylinder being occluded by the N-termini of the alpha-subunits. Is capped by the proteasome-associated ATPase, ARC.

The protein localises to the cytoplasm. The enzyme catalyses Cleavage of peptide bonds with very broad specificity.. The protein operates within protein degradation; proteasomal Pup-dependent pathway. With respect to regulation, the formation of the proteasomal ATPase ARC-20S proteasome complex, likely via the docking of the C-termini of ARC into the intersubunit pockets in the alpha-rings, may trigger opening of the gate for substrate entry. Interconversion between the open-gate and close-gate conformations leads to a dynamic regulation of the 20S proteasome proteolysis activity. In terms of biological role, component of the proteasome core, a large protease complex with broad specificity involved in protein degradation. The polypeptide is Proteasome subunit beta 2 (Salinispora tropica (strain ATCC BAA-916 / DSM 44818 / JCM 13857 / NBRC 105044 / CNB-440)).